The sequence spans 37 residues: Photosystem II reaction center protein L (37 aa).

Topologically, residues 1–13 (MEPNPNRQPVELN) are cytoplasmic. The chain crosses the membrane as a helical span at residues 14–35 (RTSLYLGLLLILVLALLFSSYF). Residues 36–37 (FN) are Lumenal-facing.

As to quaternary structure, PSII is composed of 1 copy each of membrane proteins PsbA, PsbB, PsbC, PsbD, PsbE, PsbF, PsbH, PsbI, PsbJ, PsbK, PsbL, PsbM, PsbT, PsbX, PsbY, PsbZ, Psb30/Ycf12, peripheral proteins PsbO, CyanoQ (PsbQ), PsbU, PsbV and a large number of cofactors. It forms dimeric complexes. Part of a photosystem II (PSII) assembly intermediate complex PSII-I; crystallized from a strain deleted of psbJ, it forms monomeric PSII before addition of the oxygen evolving complex. PSII-I includes 3 assembly factors not found in mature PSII (Psb27, Psb28 and Psb34). Requires PSII binds multiple chlorophylls, carotenoids and specific lipids. as cofactor.

The protein resides in the cellular thylakoid membrane. One of the components of the core complex of photosystem II (PSII). PSII is a light-driven water:plastoquinone oxidoreductase that uses light energy to abstract electrons from H(2)O, generating O(2) and a proton gradient subsequently used for ATP formation. It consists of a core antenna complex that captures photons, and an electron transfer chain that converts photonic excitation into a charge separation. This subunit is found at the monomer-monomer interface and is required for correct PSII assembly and/or dimerization. This subunit may make specific contacts with lipid(s). This is Photosystem II reaction center protein L from Thermosynechococcus vestitus (strain NIES-2133 / IAM M-273 / BP-1).